Here is a 95-residue protein sequence, read N- to C-terminus: Osteocalcin (95 aa).

A signal peptide spans 1–23 (MRTIFLLTLLTLAALCLSDLTDA). Positions 24–49 (KPSGPESDKAFMSKQEGNKVVNRLRR) are excised as a propeptide. A Gla domain is found at 46 to 92 (RLRRYLGASVPSPDPLEPTREQCELNPACDELSDQYGLKTAYKRIYG). Ca(2+)-binding residues include Glu-62, Glu-66, Glu-69, and Asp-75. 4-carboxyglutamate occurs at positions 62, 66, and 69. A disulfide bridge connects residues Cys-68 and Cys-74.

It belongs to the osteocalcin/matrix Gla protein family. In terms of processing, gamma-carboxyglutamate residues are formed by vitamin K dependent carboxylation by GGCX. These residues are essential for the binding of calcium. Carboxylated in a Ptprv/Esp-dependent process. Decarboxylation promotes the hormone activity. As to expression, bone.

It is found in the secreted. Functionally, the carboxylated form is one of the main organic components of the bone matrix, which constitutes 1-2% of the total bone protein: it acts as a negative regulator of bone formation and is required to limit bone formation without impairing bone resorption or mineralization. The carboxylated form binds strongly to apatite and calcium. The uncarboxylated form acts as a hormone secreted by osteoblasts, which regulates different cellular processes, such as energy metabolism, male fertility and brain development. Regulates of energy metabolism by acting as a hormone favoring pancreatic beta-cell proliferation, insulin secretion and sensitivity and energy expenditure. Uncarboxylated osteocalcin hormone also promotes testosterone production in the testes: acts as a ligand for G protein-coupled receptor GPRC6A at the surface of Leydig cells, initiating a signaling response that promotes the expression of enzymes required for testosterone synthesis in a CREB-dependent manner. Also acts as a regulator of brain development: osteocalcin hormone crosses the blood-brain barrier and acts as a ligand for GPR158 on neurons, initiating a signaling response that prevents neuronal apoptosis in the hippocampus, favors the synthesis of all monoamine neurotransmitters and inhibits that of gamma-aminobutyric acid (GABA). Osteocalcin also crosses the placenta during pregnancy and maternal osteocalcin is required for fetal brain development. The sequence is that of Osteocalcin from Mus musculus (Mouse).